Here is a 297-residue protein sequence, read N- to C-terminus: Cytidine deaminase (297 aa).

2 consecutive CMP/dCMP-type deaminase domains span residues 54 to 174 (SSVE…FGPK) and 192 to 297 (LRGD…YIEV). 95–97 (NQE) provides a ligand contact to substrate. His108 is a Zn(2+) binding site. Catalysis depends on Glu110, which acts as the Proton donor. Residues Cys135 and Cys138 each contribute to the Zn(2+) site.

Belongs to the cytidine and deoxycytidylate deaminase family. Homodimer. It depends on Zn(2+) as a cofactor.

The catalysed reaction is cytidine + H2O + H(+) = uridine + NH4(+). It catalyses the reaction 2'-deoxycytidine + H2O + H(+) = 2'-deoxyuridine + NH4(+). In terms of biological role, this enzyme scavenges exogenous and endogenous cytidine and 2'-deoxycytidine for UMP synthesis. The sequence is that of Cytidine deaminase from Actinobacillus pleuropneumoniae serotype 5b (strain L20).